Consider the following 123-residue polypeptide: Plasminogen (123 aa).

Positions 40–118 (DCYHGNGQSY…RWEFCNLKKC (79 aa)) constitute a Kringle domain. Disulfide bonds link C41–C118, C62–C101, and C90–C113.

It belongs to the peptidase S1 family. Plasminogen subfamily. In terms of assembly, interacts with CSPG4 and AMOT. Interacts (via the Kringle domains) with HRG; the interaction tethers PLG to the cell surface and enhances its activation. Interacts (via Kringle 4 domain) with ADA; the interaction stimulates PLG activation when in complex with DPP4. Angiostatin: Interacts with ATP5F1A; the interaction inhibits most of the angiogenic effects of angiostatin.

It localises to the secreted. The catalysed reaction is Preferential cleavage: Lys-|-Xaa &gt; Arg-|-Xaa, higher selectivity than trypsin. Converts fibrin into soluble products.. Converted into plasmin by plasminogen activators, both plasminogen and its activator being bound to fibrin. Cannot be activated with streptokinase. Its function is as follows. Plasmin dissolves the fibrin of blood clots and acts as a proteolytic factor in a variety of other processes including embryonic development, tissue remodeling, tumor invasion, and inflammation. In ovulation, weakens the walls of the Graafian follicle. It activates the urokinase-type plasminogen activator, collagenases and several complement zymogens, such as C1, C4 and C5. Cleavage of fibronectin and laminin leads to cell detachment and apoptosis. Also cleaves fibrin, thrombospondin and von Willebrand factor. Its role in tissue remodeling and tumor invasion may be modulated by CSPG4. Binds to cells. The polypeptide is Plasminogen (PLG) (Capra hircus (Goat)).